We begin with the raw amino-acid sequence, 377 residues long: MAVNVNTNVSAMTAQRYLNGASNAQQTSMERLSSGFKINSAKDDAAGLQISNRLNVQSRGLDVAVRNANDGISIAQTAEGAMNETTNILQRMRDLSLQSANGSNSKADRVAIQEEVTALNDELNRIAETTSFGGNKLLNGTFETKSFQIGADNGEAVMLSLNNMRSDNAMMGGTSYQAANGKDKDWSVQAGSNDLQITLKDTSGTDQTINISAKEGDDIEELATYINGQTDMVKASVDDEGKLQVFAGSNKVEGPVTFAGGLAGELGMQAGQAVTVDVIDVTSVGGAQESVAIVDAALQFVDSHRAQLGAFQNRFSHAISNLDNINENVSASKSRIKDTDFAKETTALTKSQILSQASSSVLAQAKQAPQAALSLLG.

Residues 104–128 (NSKADRVAIQEEVTALNDELNRIAE) adopt a coiled-coil conformation.

It belongs to the bacterial flagellin family. As to quaternary structure, heteromer of multiple flagellin subunits including FlaA, FlaB, FlaC, FlaD and possibly FlaE.

It localises to the secreted. The protein resides in the bacterial flagellum. Flagellin is the subunit protein which polymerizes to form the filaments of bacterial flagella. FlaD is not essential for flagellar synthesis and motility. May have a role in virulence unrelated to motility. The sequence is that of Flagellin D (flaD) from Vibrio anguillarum (Listonella anguillarum).